Here is a 310-residue protein sequence, read N- to C-terminus: Probable manganese-dependent inorganic pyrophosphatase (310 aa).

Residues His9, Asp13, Asp15, Asp76, His98, and Asp150 each coordinate Mn(2+).

The protein belongs to the PPase class C family. Mn(2+) serves as cofactor.

It localises to the cytoplasm. The catalysed reaction is diphosphate + H2O = 2 phosphate + H(+). The polypeptide is Probable manganese-dependent inorganic pyrophosphatase (Streptococcus thermophilus (strain ATCC BAA-491 / LMD-9)).